The following is a 455-amino-acid chain: Anaerobic glycerol-3-phosphate dehydrogenase subunit B (455 aa).

It belongs to the anaerobic G-3-P dehydrogenase subunit B family. Composed of a catalytic GlpA/B dimer and of membrane bound GlpC. FMN is required as a cofactor.

It carries out the reaction a quinone + sn-glycerol 3-phosphate = dihydroxyacetone phosphate + a quinol. It functions in the pathway polyol metabolism; glycerol degradation via glycerol kinase pathway; glycerone phosphate from sn-glycerol 3-phosphate (anaerobic route): step 1/1. In terms of biological role, conversion of glycerol 3-phosphate to dihydroxyacetone. Uses fumarate or nitrate as electron acceptor. The protein is Anaerobic glycerol-3-phosphate dehydrogenase subunit B of Aliivibrio fischeri (strain MJ11) (Vibrio fischeri).